The following is a 185-amino-acid chain: Erythropoietin (185 aa).

An N-terminal signal peptide occupies residues 1-22; it reads MLQKRGRGLLVLLLMLLEWTRP. Disulfide bonds link C32/C180 and C54/C58.

The protein belongs to the EPO/TPO family.

It is found in the secreted. Its function is as follows. Erythropoietin is the principal hormone involved in the regulation of erythrocyte differentiation and the maintenance of a physiological level of circulating erythrocyte mass. This chain is Erythropoietin (epo), found in Epinephelus coioides (Orange-spotted grouper).